Here is a 193-residue protein sequence, read N- to C-terminus: MSSKTAIKDKWKLKKWFTIVAPKTFGEVVLGTTPAFDANQALNRKVETTLYDLTGDYSLVYVHLYFRVIGVEGDRLLTRFAGHELSRDYIRSLVRRKSSKIDAITDVTTKDGYVLRVKGLALTTYRAHRSQKTEIRKIIWNILSTRASETTFDEFVQDIVFGKLSNDIFQQAKKIYPLRKVEVEKTKLLKAPA.

Belongs to the eukaryotic ribosomal protein eS1 family.

The sequence is that of Small ribosomal subunit protein eS1 from Sulfurisphaera tokodaii (strain DSM 16993 / JCM 10545 / NBRC 100140 / 7) (Sulfolobus tokodaii).